A 251-amino-acid chain; its full sequence is Probable transcriptional regulatory protein Blon_1155/BLIJ_1182 (251 aa).

Belongs to the TACO1 family.

It is found in the cytoplasm. This Bifidobacterium longum subsp. infantis (strain ATCC 15697 / DSM 20088 / JCM 1222 / NCTC 11817 / S12) protein is Probable transcriptional regulatory protein Blon_1155/BLIJ_1182.